Reading from the N-terminus, the 106-residue chain is MADLISYDDAIDAAYDIFLEMAPDNLEPVDVILFTAQFDDRGAAELVDISDDWAGHVGFDVDKEIYAEVRIGLVNEENDVLDDVFARMLISRDPDQKFCHILWKRD.

It belongs to the putative dsDNA mimic protein family.

May act as a double-stranded DNA (dsDNA) mimic. Probably regulates the activity of a dsDNA-binding protein. The sequence is that of Putative double-stranded DNA mimic protein VV1_3059 from Vibrio vulnificus (strain CMCP6).